The primary structure comprises 358 residues: Insulin gene enhancer protein ISL-2A (358 aa).

LIM zinc-binding domains follow at residues 27–80 (CVGC…CKRD) and 89–143 (CANC…RADH). The homeobox DNA-binding region spans 190 to 249 (TTRVRTVLNEKQLHTLRTCYNANPRPDALMKEQLVEMTGLSPRVIRVWFQNKRCKDKKRS). Residues 325-335 (ESGSMGNSSGS) show a composition bias toward low complexity. The tract at residues 325 to 358 (ESGSMGNSSGSDVTSLSSQLPDTPNSMVASPVDT) is disordered. A compositionally biased stretch (polar residues) spans 336-358 (DVTSLSSQLPDTPNSMVASPVDT).

It localises to the nucleus. Binds to one of the cis-acting domain of the insulin gene enhancer. May be involved in subtype specialization of primary motoneurons. The protein is Insulin gene enhancer protein ISL-2A (isl2a) of Oncorhynchus tshawytscha (Chinook salmon).